A 344-amino-acid chain; its full sequence is Ribosomal RNA large subunit methyltransferase Cfr (344 aa).

Catalysis depends on glutamate 90, which acts as the Proton acceptor. Positions 97–330 (KQGWESFCIS…ATVRTQFGSE (234 aa)) constitute a Radical SAM core domain. Cysteine 104 and cysteine 335 are oxidised to a cystine. Residues cysteine 111, cysteine 115, and cysteine 118 each contribute to the [4Fe-4S] cluster site. S-adenosyl-L-methionine-binding positions include 157–158 (GE), serine 188, 211–213 (SLH), and asparagine 292. Cysteine 335 (S-methylcysteine intermediate) is an active-site residue.

This sequence belongs to the radical SAM superfamily. RlmN family. Cfr subfamily. Requires [4Fe-4S] cluster as cofactor.

Its subcellular location is the cytoplasm. It carries out the reaction adenosine(2503) in 23S rRNA + 2 reduced [2Fe-2S]-[ferredoxin] + 2 S-adenosyl-L-methionine = 8-methyladenosine(2503) in 23S rRNA + 5'-deoxyadenosine + L-methionine + 2 oxidized [2Fe-2S]-[ferredoxin] + S-adenosyl-L-homocysteine. Functionally, specifically methylates position 8 of adenine 2503 in 23S rRNA. Confers resistance to some classes of antibiotics. In Clostridium botulinum (strain Langeland / NCTC 10281 / Type F), this protein is Ribosomal RNA large subunit methyltransferase Cfr.